The chain runs to 1059 residues: Potassium transporter TRK1 (1059 aa).

The Cytoplasmic segment spans residues 1-46; it reads MLYRVSGFYKRHTRNFTNIDYGYYIRNFIHHIASKIYPYAKVVLPN. A helical membrane pass occupies residues 47-67; it reads FRAAHYFYILTLVILGSILVY. Residues 68-73 are Extracellular-facing; that stretch reads PVKTCA. The stretch at 74 to 90 is an intramembrane region; it reads YIDVLFFTAGASTQAGL. The Extracellular portion of the chain corresponds to 91–99; the sequence is NTVNVNDLS. Residues 100 to 122 traverse the membrane as a helical segment; sequence LYQQIVLYLLATLATPIFIHGSL. The Cytoplasmic segment spans residues 123 to 625; sequence LFVRLYYFER…LGGIEYRAVK (503 aa). 3 disordered regions span residues 180–276, 304–350, and 404–574; these read REAE…IDPE, IGSP…EDED, and PWTS…SIEN. The segment covering 186 to 203 has biased composition (low complexity); that stretch reads SSSSPQSSSSQTSQPVST. Residues 236-245 show a composition bias toward basic and acidic residues; it reads EKIHFEEPQR. Over residues 335 to 344 the composition is skewed to polar residues; the sequence is PATNSVGTGN. A compositionally biased stretch (low complexity) spans 412–423; the sequence is TLSNSSKKGSLS. Composition is skewed to acidic residues over residues 428–449 and 469–490; these read DTEDDSEDEEYASIDSETSDIS and YEEDEDEDEHNSDDDDDDDDGE. The span at 524–536 shows a compositional bias: polar residues; it reads RSNTLDTPQQNTS. The span at 540 to 552 shows a compositional bias: basic residues; it reads KIRKKAPKRKTPR. Residues 556 to 566 are compositionally biased toward polar residues; sequence NASFNQHSNVS. Residues 626-649 traverse the membrane as a helical segment; that stretch reads LLIKIIVVYYVGFNIIPGVMLSIW. The Extracellular segment spans residues 650 to 668; it reads IYCMPHYKNLMISSSISPA. The stretch at 669–685 is an intramembrane region; it reads WWAFFTSQSSFNDLGLT. Over 686 to 696 the chain is Extracellular; the sequence is LTSNSMMSFNQ. Residues 697 to 713 traverse the membrane as a helical segment; that stretch reads NAFVQILCSFLIVIGNT. At 714–757 the chain is on the cytoplasmic side; the sequence is GFPILLRFIIWVMFKTARPLSLYKESLGFLLDHPRRCFTLLFPS. A helical membrane pass occupies residues 758-781; the sequence is VPTWWLFFILVVLNGFDLVIFCIL. Residues 782 to 796 lie on the Extracellular side of the membrane; that stretch reads DLHDDTFKGVDMGYR. The stretch at 797–813 is an intramembrane region; it reads VLNGLFQAFCTRTVGFS. The Extracellular portion of the chain corresponds to 814–820; sequence VMDLSQL. The helical transmembrane segment at 821-844 threads the bilayer; the sequence is HAATQVSYLIMMYISVLPIAISVR. At 845–877 the chain is on the cytoplasmic side; sequence RTNVYEEQSLGVYAKENAEGVDESAPSNYVGSH. A helical transmembrane segment spans residues 878 to 899; the sequence is LRNQLSYDLWYICLGLFIICIA. Residues 900-912 are Extracellular-facing; sequence EGKRLKEQDLRFS. Residues 913–931 lie within the membrane without spanning it; sequence IFAVLFEIVSAYGTVGMSM. Residues 932–945 lie on the Extracellular side of the membrane; the sequence is GYPGVDCSLSGEFN. The helical transmembrane segment at 946 to 968 threads the bilayer; it reads VISKLVIIAMMIRGRHRGLPYTI. Residues 969–1059 are Cytoplasmic-facing; the sequence is DRAIMLPNAA…RYVVRTVSEV (91 aa).

This sequence belongs to the TrkH potassium transport family.

Its subcellular location is the cell membrane. The enzyme catalyses K(+)(in) = K(+)(out). It catalyses the reaction chloride(in) = chloride(out). TRK1-mediated chloride conductance is blocked by 4,4'-diisothiocyanatostilbene-2,2'-disulfonic acid. Potassium transporter that mediates K(+) influx, as well as Cl(-) efflux as a secondary function. TRK1 is the major K(+) uptake transporter that regulates membrane potential and intracellular pH. The TRK1-mediated Cl(-) efflux should serve as a Cl(-) detoxification route and may play a role in sustaining C.albicans on mammalian epithelial surfaces, or in physiological saline solutions such as saliva. Its function is as follows. Mediates candidacidal activities of cysteine-free peptides, but not of defensins. The hallmark of salivary gland-secreted histatin-5 (Hst 5) killing of C.albicans is the rapid efflux of cellular ATP and other small nucleotides and ions from the cell as well as concurrent intracellular uptake of propidium iodide (PI). TRK1 is the channel for Hst 5-induced killing and histatin-5 may directly or indirectly alter TRK1 function, allowing the efflux of larger anions, including ATP, and the influx of small cationic dyes, such as PI. The chain is Potassium transporter TRK1 from Candida albicans (Yeast).